The sequence spans 305 residues: Mycothiol acetyltransferase (305 aa).

N-acetyltransferase domains lie at 10-154 and 156-305; these read DRLD…VVLE and ISLR…YARA. Position 38 (Glu38) interacts with 1D-myo-inositol 2-(L-cysteinylamino)-2-deoxy-alpha-D-glucopyranoside. 82–84 lines the acetyl-CoA pocket; it reads LAV. 1D-myo-inositol 2-(L-cysteinylamino)-2-deoxy-alpha-D-glucopyranoside contacts are provided by Glu183, Lys225, and Glu238. Acetyl-CoA is bound by residues 242 to 244 and 249 to 255; these read VAI and QGRGLGR. Tyr276 serves as a coordination point for 1D-myo-inositol 2-(L-cysteinylamino)-2-deoxy-alpha-D-glucopyranoside. Residue 281–286 coordinates acetyl-CoA; sequence NASALH.

The protein belongs to the acetyltransferase family. MshD subfamily. Monomer.

The catalysed reaction is 1D-myo-inositol 2-(L-cysteinylamino)-2-deoxy-alpha-D-glucopyranoside + acetyl-CoA = mycothiol + CoA + H(+). In terms of biological role, catalyzes the transfer of acetyl from acetyl-CoA to desacetylmycothiol (Cys-GlcN-Ins) to form mycothiol. In Rhodococcus opacus (strain B4), this protein is Mycothiol acetyltransferase.